A 489-amino-acid polypeptide reads, in one-letter code: Acetyl-coenzyme A carboxylase carboxyl transferase subunit beta, chloroplastic (489 aa).

The CoA carboxyltransferase N-terminal domain occupies Leu225 to Lys489. Zn(2+) contacts are provided by Cys229, Cys232, Cys245, and Cys248. A C4-type zinc finger spans residues Cys229 to Cys248.

Belongs to the AccD/PCCB family. In terms of assembly, acetyl-CoA carboxylase is a heterohexamer composed of biotin carboxyl carrier protein, biotin carboxylase and 2 subunits each of ACCase subunit alpha and ACCase plastid-coded subunit beta (accD). Requires Zn(2+) as cofactor.

The protein localises to the plastid. It localises to the chloroplast stroma. It catalyses the reaction N(6)-carboxybiotinyl-L-lysyl-[protein] + acetyl-CoA = N(6)-biotinyl-L-lysyl-[protein] + malonyl-CoA. It participates in lipid metabolism; malonyl-CoA biosynthesis; malonyl-CoA from acetyl-CoA: step 1/1. In terms of biological role, component of the acetyl coenzyme A carboxylase (ACC) complex. Biotin carboxylase (BC) catalyzes the carboxylation of biotin on its carrier protein (BCCP) and then the CO(2) group is transferred by the transcarboxylase to acetyl-CoA to form malonyl-CoA. The sequence is that of Acetyl-coenzyme A carboxylase carboxyl transferase subunit beta, chloroplastic from Brassica napus (Rape).